We begin with the raw amino-acid sequence, 1164 residues long: Toxin subunit YenA1 (1164 aa).

Residues 106–131 are disordered; sequence RLEKSNSPLVPQTSSSTDASSESQTN. Residues 118–130 are compositionally biased toward low complexity; that stretch reads TSSSTDASSESQT.

As to quaternary structure, semipurified toxin complex consists of at least YenA1, YenA2, YenB, YenC1, YenC2, Chi1 and Chi2. The Yen-TC:K9 subcomplex is about 26 nm tall and 22 nm in diameter with 5-fold symmetry and 5 copies of YenA1, YenA2, Chi1 and Chi2; the chitinase subunits may be solvent accessible on the exterior the complex. The Yen-TC:K9 subcomplex has no insecticidal activity. The native complex with additional YenB, YenC1 and YenC2 subunits is 16 nm taller and is insecticidal; the toxicity-conferring subunits are present at about 1 copy each.

The protein localises to the secreted. Toxin complex is secreted when grown at 25 degrees Celsius or less; at higher temperatures the proteins are present intracellularly but not secreted. Its function is as follows. Part of an orally active toxin complex (TC) with strong insecticidal effects on larvae of the Coleoptera Costelytra zealandica, Acrossidius tasmania and Adoryphorus couloni and some Lepidoptera larvae. The TC has an endochitinase activity. In Yersinia entomophaga, this protein is Toxin subunit YenA1.